We begin with the raw amino-acid sequence, 397 residues long: Methylthioribose kinase (397 aa).

Residues N44, K61, and 115 to 117 contribute to the ATP site; that span reads EDL. D233 contacts substrate. Position 250-252 (250-252) interacts with ATP; that stretch reads DPE. Position 340 (R340) interacts with substrate.

This sequence belongs to the methylthioribose kinase family. As to quaternary structure, homodimer.

It catalyses the reaction 5-(methylsulfanyl)-D-ribose + ATP = 5-(methylsulfanyl)-alpha-D-ribose 1-phosphate + ADP + H(+). The protein operates within amino-acid biosynthesis; L-methionine biosynthesis via salvage pathway; S-methyl-5-thio-alpha-D-ribose 1-phosphate from S-methyl-5'-thioadenosine (hydrolase route): step 2/2. Catalyzes the phosphorylation of methylthioribose into methylthioribose-1-phosphate. This chain is Methylthioribose kinase (mtnK), found in Bacillus subtilis (strain 168).